Reading from the N-terminus, the 263-residue chain is Cobalt-precorrin-6A reductase (263 aa).

Belongs to the precorrin-6x reductase family.

The enzyme catalyses Co-precorrin-6B + NAD(+) = Co-precorrin-6A + NADH + H(+). Its pathway is cofactor biosynthesis; adenosylcobalamin biosynthesis; cob(II)yrinate a,c-diamide from sirohydrochlorin (anaerobic route): step 7/10. Catalyzes the reduction of the macrocycle of cobalt-precorrin-6A to cobalt-precorrin-6B. This is Cobalt-precorrin-6A reductase (cbiJ) from Salmonella typhimurium (strain LT2 / SGSC1412 / ATCC 700720).